A 350-amino-acid chain; its full sequence is MEERSMQKAGFLKEPIKHIGITKHNVVPMVEEMADMAFQARNLARAASIVDLMQKDKECAVILTLAGSLISAGLKQVIIDMLEHNMVDAIVSTGANIVDQDFFEALGFKHWKGSQFADDSELRELAIDRIYDTYIDEDELRVCDDTMAIIANSMQPGAYSSREFIVEMGKYIEEKGLDKNSIVYKAYEKGVPIFCPAFSDCSAGFGLVHHQWNNPDNHVSIDSVKDFRELTKIKIENDKTGIFMIGGGVPKNFTQDIVVAAEVLGYEDVSMHTYAVQITVADERDGALSGSTLKEASSWGKVDTVYEQMVFAEATVAMPLIAGYAYHKRNWEGRPERNFNAMLDAKPVNA.

The protein belongs to the deoxyhypusine synthase family.

The chain is Deoxyhypusine synthase-like protein from Chlorobaculum parvum (strain DSM 263 / NCIMB 8327) (Chlorobium vibrioforme subsp. thiosulfatophilum).